The primary structure comprises 141 residues: ATP synthase F(0) complex subunit C2, mitochondrial (141 aa).

A mitochondrion-targeting transit peptide spans 1–66; that stretch reads MFSCFKFIST…RNFQTSAISR (66 aa). Residues 82–102 form a helical membrane-spanning segment; sequence VGVAGSGAGIGTVFGSLIIGY. An N6,N6,N6-trimethyllysine modification is found at Lys109. Residues 117–137 traverse the membrane as a helical segment; it reads ILGFALSEAMGLFCLMVAFLI.

This sequence belongs to the ATPase C chain family. F-type ATPases have 2 components, CF(1) - the catalytic core - and CF(0) - the membrane proton channel. CF(1) has five subunits: alpha(3), beta(3), gamma(1), delta(1), epsilon(1). CF(0) has three main subunits: a, b and c. Interacts with DNAJC30; interaction is direct. Post-translationally, trimethylated by ATPSCKMT at Lys-109. Methylation is required for proper incorporation of the C subunit into the ATP synthase complex and mitochondrial respiration.

It localises to the mitochondrion membrane. Mitochondrial membrane ATP synthase (F(1)F(0) ATP synthase or Complex V) produces ATP from ADP in the presence of a proton gradient across the membrane which is generated by electron transport complexes of the respiratory chain. F-type ATPases consist of two structural domains, F(1) - containing the extramembraneous catalytic core and F(0) - containing the membrane proton channel, linked together by a central stalk and a peripheral stalk. During catalysis, ATP synthesis in the catalytic domain of F(1) is coupled via a rotary mechanism of the central stalk subunits to proton translocation. Part of the complex F(0) domain. A homomeric c-ring of probably 10 subunits is part of the complex rotary element. This is ATP synthase F(0) complex subunit C2, mitochondrial from Pongo abelii (Sumatran orangutan).